Reading from the N-terminus, the 1062-residue chain is Integrin alpha-8 (1062 aa).

The signal sequence occupies residues 1–35 (MSAGTHCGPPGNRAPPFARLCCVSAALGMLWSPAC). Residues 36–1010 (LAFNLDVDKL…ATPNVSFSIP (975 aa)) are Extracellular-facing. FG-GAP repeat units follow at residues 41–104 (DVDK…RSAQ), 121–182 (NGTK…AYAE), 187–239 (RNSN…IANY), 252–305 (KQTD…STDM), 306–371 (TFIQ…LLFQ), 372–430 (DPQV…GLHS), and 434–497 (QVLQ…LHPM). Residue Asn-80 is glycosylated (N-linked (GlcNAc...) asparagine). Residues Cys-95 and Cys-105 are joined by a disulfide bond. Residue Asn-121 is glycosylated (N-linked (GlcNAc...) asparagine). Cys-149 and Cys-170 form a disulfide bridge. Asn-176 carries N-linked (GlcNAc...) asparagine glycosylation. The cysteines at positions 186 and 199 are disulfide-linked. Residue Asn-238 is glycosylated (N-linked (GlcNAc...) asparagine). Ca(2+)-binding residues include Glu-274, Thr-276, Asp-278, and Glu-282. N-linked (GlcNAc...) asparagine glycans are attached at residues Asn-301 and Asn-310. Ca(2+) is bound by residues Asp-328, Asn-330, Asp-332, Asp-336, Asp-394, Asn-396, Asp-398, Tyr-400, and Asp-402. The Cell attachment site motif lies at 454–456 (RGD). Residues Asp-458, Asp-460, Asn-462, Tyr-464, and Asp-466 each coordinate Ca(2+). N-linked (GlcNAc...) asparagine glycosylation is present at Asn-503. 2 disulfide bridges follow: Cys-506–Cys-517 and Cys-523–Cys-579. Asn-600 and Asn-604 each carry an N-linked (GlcNAc...) asparagine glycan. Intrachain disulfides connect Cys-640/Cys-646 and Cys-712/Cys-725. 6 N-linked (GlcNAc...) asparagine glycosylation sites follow: Asn-718, Asn-736, Asn-752, Asn-779, Asn-895, and Asn-922. Disulfide bonds link Cys-866-Cys-923 and Cys-928-Cys-933. Asn-1004 carries N-linked (GlcNAc...) asparagine glycosylation. The helical transmembrane segment at 1011-1031 (LWVIILAILLGLLVLAILTLA) threads the bilayer. Residues 1032–1062 (LWKCGFFDRARPPQDEMTDREQLTSDKTPEA) lie on the Cytoplasmic side of the membrane.

Belongs to the integrin alpha chain family. As to quaternary structure, heterodimer of an alpha and a beta subunit. The alpha subunit is composed of a heavy and a light chain linked by a disulfide bond. Alpha-8 associates with beta-1. As to expression, in brain, expressed in deep cortex, hippocampal CA1, basolateral amygdala and striatum. In kidney, expressed in glomerular mesengium (at protein level).

It localises to the membrane. Its subcellular location is the cell membrane. In terms of biological role, integrin alpha-8/beta-1 functions in the genesis of kidney and probably of other organs by regulating the recruitment of mesenchymal cells into epithelial structures. It recognizes the sequence R-G-D in a wide array of ligands including TNC, FN1, SPP1 TGFB1, TGFB3 and VTN. NPNT is probably its functional ligand in kidney genesis. Neuronal receptor for TNC it mediates cell-cell interactions and regulates neurite outgrowth of sensory and motor neurons. The protein is Integrin alpha-8 (Itga8) of Mus musculus (Mouse).